The following is a 259-amino-acid chain: Histidinol-phosphatase (259 aa).

The Mg(2+) site is built by E66, D82, I84, D85, and D207. Residue E66 coordinates substrate. Residues 84 to 87 and D207 each bind substrate; that span reads IDGT.

The protein belongs to the inositol monophosphatase superfamily. It depends on Mg(2+) as a cofactor.

It catalyses the reaction L-histidinol phosphate + H2O = L-histidinol + phosphate. The protein operates within amino-acid biosynthesis; L-histidine biosynthesis; L-histidine from 5-phospho-alpha-D-ribose 1-diphosphate: step 8/9. Its function is as follows. Catalyzes the dephosphorylation of histidinol-phosphate to histidinol, the direct precursor of histidine. The sequence is that of Histidinol-phosphatase (hisN) from Chlorobaculum parvum (strain DSM 263 / NCIMB 8327) (Chlorobium vibrioforme subsp. thiosulfatophilum).